The primary structure comprises 161 residues: Nucleotide-binding protein Spea_3114 (161 aa).

The protein belongs to the YajQ family.

Its function is as follows. Nucleotide-binding protein. The chain is Nucleotide-binding protein Spea_3114 from Shewanella pealeana (strain ATCC 700345 / ANG-SQ1).